The chain runs to 378 residues: Pseudouridine kinase (378 aa).

Pseudouridine is bound by residues Asp12, Thr26, 37–41, Val38, Asn137, and Lys166; that span reads GVARN. Mg(2+)-binding residues include Ser181 and Thr237. 6 residues coordinate ATP: Thr237, Gly239, Gly242, Thr298, Leu306, and Gly310. Position 311 (Asp311) interacts with pseudouridine.

Belongs to the carbohydrate kinase PfkB family. As to quaternary structure, forms homodimers.

It localises to the peroxisome. The enzyme catalyses pseudouridine + ATP = psi-UMP + ADP + H(+). Catalyzes the phosphorylation of pseudouridine to pseudouridine 5'-phosphate (PsiMP). Catalyzes the first step in a pseudouridine degradation pathway. Acts together with the pseudouridine 5'-phosphate glycosidase PUMY in the peroxisome to prevent toxic pseudouridine monophosphate accumulation. The polypeptide is Pseudouridine kinase (Arabidopsis thaliana (Mouse-ear cress)).